Here is a 321-residue protein sequence, read N- to C-terminus: Methionine import ATP-binding protein MetN (321 aa).

An ABC transporter domain is found at 2 to 241 (INAVDLHKVY…PGSLLARSLF (240 aa)). 38 to 45 (GPSGAGKS) is an ATP binding site.

Belongs to the ABC transporter superfamily. Methionine importer (TC 3.A.1.24) family. As to quaternary structure, the complex is composed of two ATP-binding proteins (MetN), two transmembrane proteins (MetI) and a solute-binding protein (MetQ).

Its subcellular location is the cell membrane. It catalyses the reaction L-methionine(out) + ATP + H2O = L-methionine(in) + ADP + phosphate + H(+). It carries out the reaction D-methionine(out) + ATP + H2O = D-methionine(in) + ADP + phosphate + H(+). Its function is as follows. Part of the ABC transporter complex MetNIQ involved in methionine import. Responsible for energy coupling to the transport system. This Thermobifida fusca (strain YX) protein is Methionine import ATP-binding protein MetN.